A 113-amino-acid polypeptide reads, in one-letter code: UPF0342 protein SEQ_0993 (113 aa).

Belongs to the UPF0342 family.

This is UPF0342 protein SEQ_0993 from Streptococcus equi subsp. equi (strain 4047).